The primary structure comprises 572 residues: Receptor-type adenylate cyclase GRESAG 4.2 (572 aa).

Over 1-225 the chain is Extracellular; that stretch reads RKTLLTFGLN…PNGNALTPAQ (225 aa). N10, N77, and N152 each carry an N-linked (GlcNAc...) asparagine glycan. A helical transmembrane segment spans residues 226 to 251; the sequence is LDWCGWCRFACADTGSRLTVFLCCIM. Residues 252-572 lie on the Cytoplasmic side of the membrane; the sequence is RNKRDNDNAP…TVRRLSVALQ (321 aa). Residues 269–424 enclose the Guanylate cyclase domain; that stretch reads TLIFTDIESS…QTANTAARTE (156 aa). 2 residues coordinate Mg(2+): D274 and D317.

Belongs to the adenylyl cyclase class-3 family. Mg(2+) serves as cofactor.

It is found in the cell membrane. It catalyses the reaction ATP = 3',5'-cyclic AMP + diphosphate. Its function is as follows. Could act as a receptor for an unknown ligand. This is Receptor-type adenylate cyclase GRESAG 4.2 (GRESAG 4.2) from Trypanosoma brucei brucei.